The primary structure comprises 290 residues: 4-hydroxy-tetrahydrodipicolinate synthase (290 aa).

T48 serves as a coordination point for pyruvate. The active-site Proton donor/acceptor is the Y137. K165 acts as the Schiff-base intermediate with substrate in catalysis. I206 lines the pyruvate pocket.

The protein belongs to the DapA family. In terms of assembly, homotetramer; dimer of dimers.

It localises to the cytoplasm. The catalysed reaction is L-aspartate 4-semialdehyde + pyruvate = (2S,4S)-4-hydroxy-2,3,4,5-tetrahydrodipicolinate + H2O + H(+). It functions in the pathway amino-acid biosynthesis; L-lysine biosynthesis via DAP pathway; (S)-tetrahydrodipicolinate from L-aspartate: step 3/4. Its function is as follows. Catalyzes the condensation of (S)-aspartate-beta-semialdehyde [(S)-ASA] and pyruvate to 4-hydroxy-tetrahydrodipicolinate (HTPA). In Enterococcus faecalis (strain ATCC 700802 / V583), this protein is 4-hydroxy-tetrahydrodipicolinate synthase.